A 419-amino-acid chain; its full sequence is L-rhamnose isomerase (419 aa).

3 residues coordinate Mn(2+): histidine 262, aspartate 294, and aspartate 296.

This sequence belongs to the rhamnose isomerase family. As to quaternary structure, homotetramer. Mn(2+) serves as cofactor.

The protein localises to the cytoplasm. It catalyses the reaction L-rhamnopyranose = L-rhamnulose. The protein operates within carbohydrate degradation; L-rhamnose degradation; glycerone phosphate from L-rhamnose: step 1/3. In terms of biological role, catalyzes the interconversion of L-rhamnose and L-rhamnulose. This is L-rhamnose isomerase from Escherichia coli (strain SMS-3-5 / SECEC).